Reading from the N-terminus, the 104-residue chain is BLOC-1-related complex subunit 7 (104 aa).

Belongs to the BORCS7 family.

Its subcellular location is the lysosome membrane. Functionally, as part of a BORC-like complex may play a role in lysosomes movement and localization at the cell periphery. Associated with the cytosolic face of lysosomes, this complex may couple lysosomes to microtubule plus-end-directed kinesin motor. This chain is BLOC-1-related complex subunit 7, found in Xenopus tropicalis (Western clawed frog).